We begin with the raw amino-acid sequence, 348 residues long: Holliday junction branch migration complex subunit RuvB (348 aa).

The interval 4 to 184 is large ATPase domain (RuvB-L); that stretch reads ADRLIAASGR…FGIVQRLEFY (181 aa). Residues I23, R24, G65, K68, T69, T70, 131 to 133, R174, Y184, and R221 each bind ATP; that span reads EDF. T69 serves as a coordination point for Mg(2+). Residues 185-255 are small ATPAse domain (RuvB-S); the sequence is NDKDLSTIVS…VADMALNLLD (71 aa). The interval 258–348 is head domain (RuvB-H); that stretch reads ERGFDHSDRR…GGDFSEPGDE (91 aa). DNA-binding residues include R294, R313, and R318.

This sequence belongs to the RuvB family. As to quaternary structure, homohexamer. Forms an RuvA(8)-RuvB(12)-Holliday junction (HJ) complex. HJ DNA is sandwiched between 2 RuvA tetramers; dsDNA enters through RuvA and exits via RuvB. An RuvB hexamer assembles on each DNA strand where it exits the tetramer. Each RuvB hexamer is contacted by two RuvA subunits (via domain III) on 2 adjacent RuvB subunits; this complex drives branch migration. In the full resolvosome a probable DNA-RuvA(4)-RuvB(12)-RuvC(2) complex forms which resolves the HJ.

Its subcellular location is the cytoplasm. The enzyme catalyses ATP + H2O = ADP + phosphate + H(+). Its function is as follows. The RuvA-RuvB-RuvC complex processes Holliday junction (HJ) DNA during genetic recombination and DNA repair, while the RuvA-RuvB complex plays an important role in the rescue of blocked DNA replication forks via replication fork reversal (RFR). RuvA specifically binds to HJ cruciform DNA, conferring on it an open structure. The RuvB hexamer acts as an ATP-dependent pump, pulling dsDNA into and through the RuvAB complex. RuvB forms 2 homohexamers on either side of HJ DNA bound by 1 or 2 RuvA tetramers; 4 subunits per hexamer contact DNA at a time. Coordinated motions by a converter formed by DNA-disengaged RuvB subunits stimulates ATP hydrolysis and nucleotide exchange. Immobilization of the converter enables RuvB to convert the ATP-contained energy into a lever motion, pulling 2 nucleotides of DNA out of the RuvA tetramer per ATP hydrolyzed, thus driving DNA branch migration. The RuvB motors rotate together with the DNA substrate, which together with the progressing nucleotide cycle form the mechanistic basis for DNA recombination by continuous HJ branch migration. Branch migration allows RuvC to scan DNA until it finds its consensus sequence, where it cleaves and resolves cruciform DNA. This Pseudomonas putida (strain ATCC 47054 / DSM 6125 / CFBP 8728 / NCIMB 11950 / KT2440) protein is Holliday junction branch migration complex subunit RuvB.